The chain runs to 329 residues: Ferredoxin--NADP reductase 2 (329 aa).

FAD is bound by residues Thr18, Glu37, Gln45, Tyr50, Val90, Phe124, Asp285, and Ser326.

Belongs to the ferredoxin--NADP reductase type 2 family. Homodimer. It depends on FAD as a cofactor.

It catalyses the reaction 2 reduced [2Fe-2S]-[ferredoxin] + NADP(+) + H(+) = 2 oxidized [2Fe-2S]-[ferredoxin] + NADPH. The protein is Ferredoxin--NADP reductase 2 of Bacillus mycoides (strain KBAB4) (Bacillus weihenstephanensis).